The sequence spans 469 residues: MMFLTQLVSALFLFFLGPISYGKPVETFVLPLAQDAPIPPSEDPFYQPPPGYEETEPGTVLRQRRPPFPISLFRSAPIDLAATYQVLYRSSDTFGQPTATVSTILIPHNANMSKVLSYQVVEDAAFINCAPSYALQLHSDPGGLFGTIIIQSELLLITAALENGWVVTIPDYEGPAAAFLAYWRAGYATLDGIRATLASSGFTGVDPDAAVGLWGTSGGSVASAFAADLHPKYAPELNIVGAALGGVVPSITTALHSLNKGFDAGIIVSGVIGLSKEYTYMQPILESYLVPHLRDKFMSAGKKCSGAVSLDFRMEDIFSYFKGGEESGLFADPRVKAILDHNAMPQGVPEIPILILKSVNDEISPISDTDALVEKYCSNGVTIDYKRDLLSVHTILAVTGAPEAVLWLRDRLDGITVEKGCKTSTIFMTLLQPGALEVMSKTIIDNLLNLLGKPVGPRLRTEIVHVPPL.

An N-terminal signal peptide occupies residues 1–22 (MMFLTQLVSALFLFFLGPISYG). Positions 40 to 51 (PSEDPFYQPPPG) are enriched in pro residues. Positions 40-59 (PSEDPFYQPPPGYEETEPGT) are disordered. The N-linked (GlcNAc...) asparagine glycan is linked to asparagine 111. An intrachain disulfide couples cysteine 129 to cysteine 304. Active-site charge relay system residues include serine 217, aspartate 361, and histidine 393. Cysteine 377 and cysteine 421 form a disulfide bridge.

Belongs to the AB hydrolase superfamily. Lipase family. Class Lip subfamily. As to quaternary structure, monomer.

Its subcellular location is the secreted. The catalysed reaction is a triacylglycerol + H2O = a diacylglycerol + a fatty acid + H(+). Hydrolyzes triglycerides, with a preference for substrates with short-chain lengths (C4 to C8). In Arthroderma benhamiae (strain ATCC MYA-4681 / CBS 112371) (Trichophyton mentagrophytes), this protein is Lipase A.